Consider the following 298-residue polypeptide: Porphobilinogen deaminase (298 aa).

C239 carries the post-translational modification S-(dipyrrolylmethanemethyl)cysteine.

This sequence belongs to the HMBS family. In terms of assembly, monomer. The cofactor is dipyrromethane.

The catalysed reaction is 4 porphobilinogen + H2O = hydroxymethylbilane + 4 NH4(+). It functions in the pathway porphyrin-containing compound metabolism; protoporphyrin-IX biosynthesis; coproporphyrinogen-III from 5-aminolevulinate: step 2/4. In terms of biological role, tetrapolymerization of the monopyrrole PBG into the hydroxymethylbilane pre-uroporphyrinogen in several discrete steps. In Ehrlichia chaffeensis (strain ATCC CRL-10679 / Arkansas), this protein is Porphobilinogen deaminase.